Reading from the N-terminus, the 179-residue chain is MAGNREDRKAKVIEVLNKARAMELHAIHQYMNQHYSLDDMDYGELAANMKLIAIDEMRHAENFAERIKELGGEPTTQKEGKVVTGQAVPVIYESDADQEDATIEAYSQFLKVCKEQGDIVTARLFERIIEEEQAHLTYYENIGSHIKNLGDTYLAKIAGTPSSTGTASKGFVTATPAAE.

In terms of domain architecture, Ferritin-like diiron spans 1–150; it reads MAGNREDRKA…NIGSHIKNLG (150 aa). The Fe cation site is built by Glu23 and Glu56. Met57 contacts Fe-coproporphyrin III. Residues His59, Glu99, Glu132, and His135 each coordinate Fe cation.

It belongs to the bacterioferritin family. In terms of assembly, homooligomer of 24 subunits, arranged as 12 dimers, that are packed together to form an approximately spherical molecule with a central cavity, in which large amounts of iron can be deposited. Requires Fe-coproporphyrin III as cofactor. Fe cation is required as a cofactor.

It catalyses the reaction 4 Fe(2+) + O2 + 4 H(+) = 4 Fe(3+) + 2 H2O. The enzyme catalyses Fe(2+)(in) = Fe(2+)(out). Functionally, iron-storage protein, whose ferroxidase center binds Fe(2+), oxidizes it using dioxygen to Fe(3+), and participates in the subsequent Fe(3+) oxide mineral core formation within the central cavity of the BFR protein shell. In Desulfovibrio desulfuricans (strain ATCC 27774 / DSM 6949 / MB), this protein is Bacterioferritin (bfr).